The following is a 779-amino-acid chain: MGKSEGPVGMVESAGRAGQKRPGFLEGGLLLLLLLVTAALVALGVLYADRRGKQLPRLASRLCFLQEERTFVKRKPRGIPEAQEVSEVCTTPGCVIAAARILQNMDPTTEPCDDFYQFACGGWLRRHVIPETNSRYSIFDVLRDELEVILKAVLENSTAKDRPAVEKARTLYRSCMNQSVIEKRGSQPLLDILEVVGGWPVAMDRWNETVGLEWELERQLALMNSQFNRRVLIDLFIWNDDQNSSRHIIYIDQPTLGMPSREYYFNGGSNRKVREAYLQFMVSVATLLREDANLPRDSCLVQEDMVQVLELETQLAKATVPQEERHDVIALYHRMGLEELQSQFGLKGFNWTLFIQTVLSSVKIKLLPDEEVVVYGIPYLQNLENIIDTYSARTIQNYLVWRLVLDRIGSLSQRFKDTRVNYRKALFGTMVEEVRWRECVGYVNSNMENAVGSLYVREAFPGDSKSMVRELIDKVRTVFVETLDELGWMDEESKKKAQEKAMSIREQIGHPDYILEEMNRRLDEEYSNLNFSEDLYFENSLQNLKVGAQRSLRKLREKVDPNLWIIGAAVVNAFYSPNRNQIVFPAGILQPPFFSKEQPQALNFGGIGMVIGHEITHGFDDNGRNFDKNGNMMDWWSNFSTQHFREQSECMIYQYGNYSWDLADEQNVNGFNTLGENIADNGGVRQAYKAYLKWMAEGGKDQQLPGLDLTHEQLFFINYAQVWCGSYRPEFAIQSIKTDVHSPLKYRVLGSLQNLAAFADTFHCARGTPMHPKERCRVW.

Topologically, residues 1 to 27 (MGKSEGPVGMVESAGRAGQKRPGFLEG) are cytoplasmic. Residues 28 to 48 (GLLLLLLLVTAALVALGVLYA) traverse the membrane as a helical; Signal-anchor for type II membrane protein segment. Topologically, residues 49-779 (DRRGKQLPRL…MHPKERCRVW (731 aa)) are lumenal. Residues 88–779 (VCTTPGCVIA…MHPKERCRVW (692 aa)) enclose the Peptidase M13 domain. 5 cysteine pairs are disulfide-bonded: C89–C94, C112–C764, C120–C724, C175–C439, and C650–C776. R135 serves as a coordination point for a peptide. N-linked (GlcNAc...) asparagine glycans are attached at residues N177, N207, N350, and N530. Positions 515 to 560 (LEEMNRRLDEEYSNLNFSEDLYFENSLQNLKVGAQRSLRKLREKVD) form a coiled coil. Residue H613 participates in Zn(2+) binding. E614 is an active-site residue. H617 contributes to the Zn(2+) binding site. N657 is a glycosylation site (N-linked (GlcNAc...) asparagine). E676 contacts Zn(2+). D680 serves as the catalytic Proton donor.

Belongs to the peptidase M13 family. It depends on Zn(2+) as a cofactor. N-glycosylated. Predominantly expressed in testis. Weakly expressed in brain, kidney and heart.

The protein localises to the membrane. It localises to the secreted. The enzyme catalyses Preferential cleavage of polypeptides between hydrophobic residues, particularly with Phe or Tyr at P1'.. Inhibited by thiorphan and phosphoramidon. In terms of biological role, metalloprotease involved in sperm function, possibly by modulating the processes of fertilization and early embryonic development. Degrades a broad variety of small peptides with a preference for peptides shorter than 3 kDa containing neutral bulky aliphatic or aromatic amino acid residues. Shares the same substrate specificity with MME and cleaves peptides at the same amide bond. The chain is Membrane metallo-endopeptidase-like 1 (MMEL1) from Homo sapiens (Human).